Here is a 118-residue protein sequence, read N- to C-terminus: V-type proton ATPase subunit F (118 aa).

This sequence belongs to the V-ATPase F subunit family. As to quaternary structure, V-ATPase is a heteromultimeric enzyme composed of a peripheral catalytic V1 complex (components A to H) attached to an integral membrane V0 proton pore complex (components: a, c, c', c'', d, e, f and VOA1).

The protein localises to the vacuole membrane. Subunit of the V1 complex of vacuolar(H+)-ATPase (V-ATPase), a multisubunit enzyme composed of a peripheral complex (V1) that hydrolyzes ATP and a membrane integral complex (V0) that translocates protons. V-ATPase is responsible for acidifying and maintaining the pH of intracellular compartments. The polypeptide is V-type proton ATPase subunit F (Saccharomyces cerevisiae (strain ATCC 204508 / S288c) (Baker's yeast)).